Consider the following 531-residue polypeptide: Bifunctional aspartate aminotransferase and L-aspartate beta-decarboxylase (531 aa).

L-aspartate is bound by residues Gly-114 and Asn-255. Lys-314 is subject to N6-(pyridoxal phosphate)lysine. Residue Arg-496 participates in L-aspartate binding.

The protein belongs to the class-I pyridoxal-phosphate-dependent aminotransferase family. As to quaternary structure, homododecamer. Requires pyridoxal 5'-phosphate as cofactor.

The catalysed reaction is L-aspartate + H(+) = L-alanine + CO2. It catalyses the reaction L-aspartate + 2-oxoglutarate = oxaloacetate + L-glutamate. Its activity is regulated as follows. Inhibited by 10 mM Co(2+), Mn(2+) and Ni(2+), and by 1 mM Cu(2+) and Hg(2+). Functionally, bifunctional enzyme that has both L-aspartate decarboxylase and transaminase activity. Has high activity with L-aspartate, and much lower activity with D-aspartate, L-lysine and L-glutamine. In Pseudomonas sp, this protein is Bifunctional aspartate aminotransferase and L-aspartate beta-decarboxylase.